A 224-amino-acid chain; its full sequence is Ribose-5-phosphate isomerase A (224 aa).

Substrate is bound by residues 32–35, 85–88, and 98–101; these read TGST, DGAD, and KGGG. The active-site Proton acceptor is Glu-107. Position 125 (Lys-125) interacts with substrate.

This sequence belongs to the ribose 5-phosphate isomerase family. In terms of assembly, homodimer.

The enzyme catalyses aldehydo-D-ribose 5-phosphate = D-ribulose 5-phosphate. It functions in the pathway carbohydrate degradation; pentose phosphate pathway; D-ribose 5-phosphate from D-ribulose 5-phosphate (non-oxidative stage): step 1/1. In terms of biological role, catalyzes the reversible conversion of ribose-5-phosphate to ribulose 5-phosphate. In Pseudomonas entomophila (strain L48), this protein is Ribose-5-phosphate isomerase A.